The primary structure comprises 406 residues: uncharacterized protein (406 aa).

This sequence to S.pombe SpAC12C2.04.

The protein resides in the cytoplasm. Its subcellular location is the nucleus. This is an uncharacterized protein from Schizosaccharomyces pombe (strain 972 / ATCC 24843) (Fission yeast).